Here is a 201-residue protein sequence, read N- to C-terminus: Putative toxin HigB2 (201 aa).

The protein belongs to the mycobacterial HigB family.

Putative toxic component of a type II toxin-antitoxin (TA) system. Its cognate antitoxin would be HigA2. The chain is Putative toxin HigB2 from Mycobacterium tuberculosis (strain ATCC 25618 / H37Rv).